An 872-amino-acid polypeptide reads, in one-letter code: Probably inactive leucine-rich repeat receptor-like protein kinase At5g06940 (872 aa).

The N-terminal stretch at 1–26 (MATRFKHQFSISLALTFFFFFTKTFS) is a signal peptide. The Extracellular segment spans residues 27–540 (FTENEELGNL…RSNFHKKGGK (514 aa)). Asparagine 55, asparagine 63, and asparagine 86 each carry an N-linked (GlcNAc...) asparagine glycan. 18 LRR repeats span residues 79–98 (SINLQSLNLSGEISDSICDL), 99–122 (PYLTHLDLSLNFFNQPIPLQLSRC), 123–146 (VTLETLNLSSNLIWGTIPDQISEF), 147–169 (SSLKVIDFSSNHVEGMIPEDLGL), 171–193 (FNLQVLNLGSNLLTGIVPPAIGK), 195–217 (SELVVLDLSENSYLVSEIPSFLG), 219–243 (LDKLEQLLLHRSGFHGEIPTSFVGL), 244–267 (TSLRTLDLSLNNLSGEIPRSLGPS), 269–292 (KNLVSLDVSQNKLSGSFPSGICSG), 294–316 (RLINLSLHSNFFEGSLPNSIGEC), 317–340 (LSLERLQVQNNGFSGEFPVVLWKL), 341–365 (PRIKIIRADNNRFTGQVPESVSLAS), 367–389 (LEQVEIVNNSFSGEIPHGLGLVK), 391–412 (LYKFSASQNRFSGELPPNFCDS), 413–435 (PVLSIVNISHNRLLGKIPELKNC), 436–459 (KKLVSLSLAGNAFTGEIPPSLADL), 460–482 (HVLTYLDLSDNSLTGLIPQGLQN), and 484–506 (KLALFNVSFNGLSGEVPHSLVSG). Asparagine 129 carries an N-linked (GlcNAc...) asparagine glycan. N-linked (GlcNAc...) asparagine glycosylation is present at asparagine 255. An N-linked (GlcNAc...) asparagine glycan is attached at asparagine 297. N-linked (GlcNAc...) asparagine glycosylation is present at asparagine 374. Asparagine 419 carries N-linked (GlcNAc...) asparagine glycosylation. Asparagine 489 carries an N-linked (GlcNAc...) asparagine glycan. Residues 541-561 (ALVLSLICLALAIATFLAVLY) form a helical membrane-spanning segment. Residues 562 to 872 (RYSRKKVQFK…ISSSVSPVSA (311 aa)) lie on the Cytoplasmic side of the membrane. Threonine 585 is modified (phosphothreonine). Residues 589 to 863 (LMKVVNESCP…VKVIKLLEGI (275 aa)) enclose the Protein kinase domain. Residues 595-603 (ESCPSGSEV) and lysine 617 contribute to the ATP site. 4 positions are modified to phosphotyrosine: tyrosine 662, tyrosine 699, tyrosine 754, and tyrosine 761.

Belongs to the protein kinase superfamily. Ser/Thr protein kinase family.

The protein localises to the membrane. This is Probably inactive leucine-rich repeat receptor-like protein kinase At5g06940 from Arabidopsis thaliana (Mouse-ear cress).